Here is a 211-residue protein sequence, read N- to C-terminus: tRNA (guanine-N(7)-)-methyltransferase (211 aa).

S-adenosyl-L-methionine contacts are provided by Glu-43, Glu-68, Asn-95, and Asp-117. Asp-117 is a catalytic residue. Substrate is bound by residues Lys-121, Asp-153, and 190 to 193 (TEYE).

The protein belongs to the class I-like SAM-binding methyltransferase superfamily. TrmB family.

It catalyses the reaction guanosine(46) in tRNA + S-adenosyl-L-methionine = N(7)-methylguanosine(46) in tRNA + S-adenosyl-L-homocysteine. It functions in the pathway tRNA modification; N(7)-methylguanine-tRNA biosynthesis. In terms of biological role, catalyzes the formation of N(7)-methylguanine at position 46 (m7G46) in tRNA. This Alkaliphilus oremlandii (strain OhILAs) (Clostridium oremlandii (strain OhILAs)) protein is tRNA (guanine-N(7)-)-methyltransferase.